The primary structure comprises 250 residues: FAS1 domain-containing protein AER383W (250 aa).

The first 18 residues, 1–18 (MRLKTILLGFCAFHVARS), serve as a signal peptide directing secretion. An FAS1 domain is found at 87-247 (GVTLDDRLQS…GIVLVIDSSL (161 aa)).

The protein resides in the vacuole. This Eremothecium gossypii (strain ATCC 10895 / CBS 109.51 / FGSC 9923 / NRRL Y-1056) (Yeast) protein is FAS1 domain-containing protein AER383W.